Here is a 539-residue protein sequence, read N- to C-terminus: Probable protein kinase UbiB (539 aa).

One can recognise a Protein kinase domain in the interval 125–493 (RFDVEPLASA…RRRQGDRWAL (369 aa)). Residues 131–139 (LASASVAQV) and K153 each bind ATP. Residue D288 is the Proton acceptor of the active site. 2 helical membrane passes run 495–515 (LLGA…AEAA) and 517–537 (LAAP…YLIV).

This sequence belongs to the ABC1 family. UbiB subfamily.

Its subcellular location is the cell inner membrane. Its pathway is cofactor biosynthesis; ubiquinone biosynthesis [regulation]. In terms of biological role, is probably a protein kinase regulator of UbiI activity which is involved in aerobic coenzyme Q (ubiquinone) biosynthesis. This chain is Probable protein kinase UbiB, found in Pseudomonas putida (strain W619).